Consider the following 249-residue polypeptide: Probable septum site-determining protein MinC (249 aa).

The disordered stretch occupies residues 89-130 (SLFEPGMPPAMKGGRPAPDFEVPEVDPADPPKAGKGKAAAPI). Residues 119–129 (PKAGKGKAAAP) are compositionally biased toward low complexity.

This sequence belongs to the MinC family. Interacts with MinD and FtsZ.

Functionally, cell division inhibitor that blocks the formation of polar Z ring septums. Rapidly oscillates between the poles of the cell to destabilize FtsZ filaments that have formed before they mature into polar Z rings. Prevents FtsZ polymerization. This is Probable septum site-determining protein MinC from Rhizobium meliloti (strain 1021) (Ensifer meliloti).